We begin with the raw amino-acid sequence, 239 residues long: NAD-dependent protein deacylase (239 aa).

A Deacetylase sirtuin-type domain is found at 1-239 (MNVLILTGAG…PKLLNHFSAM (239 aa)). 8-27 (GAGISAESGIPTFRDANGLW) provides a ligand contact to NAD(+). Substrate is bound by residues tyrosine 52 and arginine 55. Position 93–96 (93–96 (QNID)) interacts with NAD(+). Histidine 111 acts as the Proton acceptor in catalysis. Residues 182–184 (GTS), 207–209 (NLD), and alanine 225 each bind NAD(+).

This sequence belongs to the sirtuin family. Class III subfamily.

Its subcellular location is the cytoplasm. It catalyses the reaction N(6)-acetyl-L-lysyl-[protein] + NAD(+) + H2O = 2''-O-acetyl-ADP-D-ribose + nicotinamide + L-lysyl-[protein]. It carries out the reaction N(6)-succinyl-L-lysyl-[protein] + NAD(+) + H2O = 2''-O-succinyl-ADP-D-ribose + nicotinamide + L-lysyl-[protein]. NAD-dependent lysine deacetylase and desuccinylase that specifically removes acetyl and succinyl groups on target proteins. Modulates the activities of several proteins which are inactive in their acylated form. This Rhodopirellula baltica (strain DSM 10527 / NCIMB 13988 / SH1) protein is NAD-dependent protein deacylase.